A 311-amino-acid polypeptide reads, in one-letter code: Ribosomal RNA small subunit methyltransferase H (311 aa).

S-adenosyl-L-methionine contacts are provided by residues 34 to 36, Asp-51, Phe-75, Asp-93, and Gln-100; that span reads GGY.

Belongs to the methyltransferase superfamily. RsmH family.

It localises to the cytoplasm. The enzyme catalyses cytidine(1402) in 16S rRNA + S-adenosyl-L-methionine = N(4)-methylcytidine(1402) in 16S rRNA + S-adenosyl-L-homocysteine + H(+). Functionally, specifically methylates the N4 position of cytidine in position 1402 (C1402) of 16S rRNA. This chain is Ribosomal RNA small subunit methyltransferase H, found in Caulobacter vibrioides (strain ATCC 19089 / CIP 103742 / CB 15) (Caulobacter crescentus).